The chain runs to 428 residues: Glucose-1-phosphate adenylyltransferase (428 aa).

Residues Tyr114, Gly179, Glu194–Lys195, and Ser212 contribute to the alpha-D-glucose 1-phosphate site.

It belongs to the bacterial/plant glucose-1-phosphate adenylyltransferase family. As to quaternary structure, homotetramer.

It carries out the reaction alpha-D-glucose 1-phosphate + ATP + H(+) = ADP-alpha-D-glucose + diphosphate. It functions in the pathway glycan biosynthesis; glycogen biosynthesis. In terms of biological role, involved in the biosynthesis of ADP-glucose, a building block required for the elongation reactions to produce glycogen. Catalyzes the reaction between ATP and alpha-D-glucose 1-phosphate (G1P) to produce pyrophosphate and ADP-Glc. The chain is Glucose-1-phosphate adenylyltransferase from Yersinia pseudotuberculosis serotype IB (strain PB1/+).